A 445-amino-acid chain; its full sequence is Trigger factor (445 aa).

The PPIase FKBP-type domain occupies 162–247 (GDQVTIDAIG…IKAVHTAEPT (86 aa)).

This sequence belongs to the FKBP-type PPIase family. Tig subfamily.

It is found in the cytoplasm. It carries out the reaction [protein]-peptidylproline (omega=180) = [protein]-peptidylproline (omega=0). In terms of biological role, involved in protein export. Acts as a chaperone by maintaining the newly synthesized protein in an open conformation. Functions as a peptidyl-prolyl cis-trans isomerase. The chain is Trigger factor from Rickettsia peacockii (strain Rustic).